Here is a 122-residue protein sequence, read N- to C-terminus: Large ribosomal subunit protein uL14 (122 aa).

This sequence belongs to the universal ribosomal protein uL14 family. In terms of assembly, part of the 50S ribosomal subunit. Forms a cluster with proteins L3 and L19. In the 70S ribosome, L14 and L19 interact and together make contacts with the 16S rRNA in bridges B5 and B8.

Functionally, binds to 23S rRNA. Forms part of two intersubunit bridges in the 70S ribosome. This chain is Large ribosomal subunit protein uL14, found in Mycobacteroides abscessus (strain ATCC 19977 / DSM 44196 / CCUG 20993 / CIP 104536 / JCM 13569 / NCTC 13031 / TMC 1543 / L948) (Mycobacterium abscessus).